Consider the following 284-residue polypeptide: D-tagatose-1,6-bisphosphate aldolase subunit GatY (284 aa).

Catalysis depends on D82, which acts as the Proton donor. Residues H83 and H180 each coordinate Zn(2+). A dihydroxyacetone phosphate-binding site is contributed by G181. H208 provides a ligand contact to Zn(2+). Residues 209 to 211 and 230 to 233 contribute to the dihydroxyacetone phosphate site; these read GAS and NVAT.

It belongs to the class II fructose-bisphosphate aldolase family. TagBP aldolase GatY subfamily. Forms a complex with GatZ. Zn(2+) is required as a cofactor.

The catalysed reaction is D-tagatofuranose 1,6-bisphosphate = D-glyceraldehyde 3-phosphate + dihydroxyacetone phosphate. It participates in carbohydrate metabolism; D-tagatose 6-phosphate degradation; D-glyceraldehyde 3-phosphate and glycerone phosphate from D-tagatose 6-phosphate: step 2/2. Its function is as follows. Catalytic subunit of the tagatose-1,6-bisphosphate aldolase GatYZ, which catalyzes the reversible aldol condensation of dihydroxyacetone phosphate (DHAP or glycerone-phosphate) with glyceraldehyde 3-phosphate (G3P) to produce tagatose 1,6-bisphosphate (TBP). Requires GatZ subunit for full activity and stability. Is involved in the catabolism of galactitol. The protein is D-tagatose-1,6-bisphosphate aldolase subunit GatY of Escherichia coli (strain K12 / MC4100 / BW2952).